We begin with the raw amino-acid sequence, 207 residues long: Interferon kappa (207 aa).

The N-terminal stretch at 1-27 (MSTKPDMIQKCLWLEILMGIFIAGTLS) is a signal peptide. Disulfide bonds link cysteine 30–cysteine 128 and cysteine 59–cysteine 181. Residues 118–148 (LDQQAEYLNQCLEEDKNENEDMKEMKENEMK) are a coiled coil.

Belongs to the alpha/beta interferon family. As to expression, expressed in keratinocytes, monocytes and in resting dendritic cells.

The protein localises to the secreted. May play a role in the regulation of immune cell function. Cytokine that imparts cellular protection against viral infection in a species-specific manner. Activates the interferon-stimulated response element signaling pathway. It is able to directly modulate cytokine release from monocytes and dendritic cells. Binds heparin. This chain is Interferon kappa (IFNK), found in Homo sapiens (Human).